The sequence spans 120 residues: Ribosome-binding factor A (120 aa).

The protein belongs to the RbfA family. As to quaternary structure, monomer. Binds 30S ribosomal subunits, but not 50S ribosomal subunits or 70S ribosomes.

The protein localises to the cytoplasm. Functionally, one of several proteins that assist in the late maturation steps of the functional core of the 30S ribosomal subunit. Associates with free 30S ribosomal subunits (but not with 30S subunits that are part of 70S ribosomes or polysomes). Required for efficient processing of 16S rRNA. May interact with the 5'-terminal helix region of 16S rRNA. This is Ribosome-binding factor A from Desulforamulus reducens (strain ATCC BAA-1160 / DSM 100696 / MI-1) (Desulfotomaculum reducens).